A 553-amino-acid polypeptide reads, in one-letter code: Zinc finger matrin-type protein 1 (553 aa).

Positions 16–36 are disordered; that stretch reads TPSSPAATCSGPMAGGDTSSN. Matrin-type zinc fingers lie at residues 61–91, 125–155, 223–253, and 275–305; these read TFCKVCNAVLQFESHRISHYEGKKHAQKVRL, KFCGLCNMVFSSPVVAQTHYVGKVHAKKMRQ, KYCKLCCASFNKALVAQQHYSGKKHARNQAR, and YVCPICNITLTSIEMYQSHMQGNKHQIKESM. 2 disordered regions span residues 341 to 402 and 428 to 553; these read QFRQ…DQRV and HISR…ILGF. Residues 350–362 are compositionally biased toward acidic residues; it reads DSCDYEEEEEQEP. Positions 431–453 are enriched in low complexity; sequence RSPTSQDSSDNSSGSSSDESSGS. Positions 456 to 476 are enriched in basic residues; that stretch reads KDKRRKRKHHRESRLRGSGRI. The segment covering 477–513 has biased composition (basic and acidic residues); that stretch reads RRGDENSEKRKRKGEDADSGKEDNKHDRGKTSGGDKD.

It is found in the nucleus. In Xenopus tropicalis (Western clawed frog), this protein is Zinc finger matrin-type protein 1 (zmat1).